The following is a 375-amino-acid chain: Probable pectin lyase B (375 aa).

Positions 1 to 19 (MKYAAFLPTIGALVSQAIA) are cleaved as a signal peptide. Cystine bridges form between Cys82–Cys101 and Cys91–Cys225. N-linked (GlcNAc...) asparagine glycosylation occurs at Asn128. Arg255 is a catalytic residue. A disulfide bridge connects residues Cys321 and Cys329.

The protein belongs to the polysaccharide lyase 1 family.

It localises to the secreted. It carries out the reaction Eliminative cleavage of (1-&gt;4)-alpha-D-galacturonan methyl ester to give oligosaccharides with 4-deoxy-6-O-methyl-alpha-D-galact-4-enuronosyl groups at their non-reducing ends.. Functionally, pectinolytic enzymes consist of four classes of enzymes: pectin lyase, polygalacturonase, pectin methylesterase and rhamnogalacturonase. Among pectinolytic enzymes, pectin lyase is the most important in depolymerization of pectin, since it cleaves internal glycosidic bonds of highly methylated pectins. This chain is Probable pectin lyase B (pelB), found in Aspergillus fumigatus (strain CBS 144.89 / FGSC A1163 / CEA10) (Neosartorya fumigata).